Consider the following 505-residue polypeptide: Lysine--tRNA ligase (505 aa).

Residues Glu415 and Glu422 each contribute to the Mg(2+) site.

This sequence belongs to the class-II aminoacyl-tRNA synthetase family. Homodimer. Mg(2+) serves as cofactor.

It localises to the cytoplasm. The catalysed reaction is tRNA(Lys) + L-lysine + ATP = L-lysyl-tRNA(Lys) + AMP + diphosphate. This chain is Lysine--tRNA ligase, found in Yersinia pseudotuberculosis serotype O:1b (strain IP 31758).